The primary structure comprises 335 residues: uncharacterized protein (335 aa).

The disordered stretch occupies residues 201–236 (GPMAKNKARRKEDNYDTHNCDDANQDKKEEAEGKNT). Positions 210 to 235 (RKEDNYDTHNCDDANQDKKEEAEGKN) are enriched in basic and acidic residues.

Dispensable for normal development and fertility. This is an uncharacterized protein from Homo sapiens (Human).